The chain runs to 390 residues: Galactokinase (390 aa).

A substrate-binding site is contributed by 33-36 (EHTD). ATP is bound by residues serine 67 and 124-130 (GAGLSSS). Serine 130 and glutamate 162 together coordinate Mg(2+). Aspartate 174 (proton acceptor) is an active-site residue. Residue tyrosine 224 coordinates substrate.

Belongs to the GHMP kinase family. GalK subfamily.

The protein localises to the cytoplasm. The enzyme catalyses alpha-D-galactose + ATP = alpha-D-galactose 1-phosphate + ADP + H(+). It functions in the pathway carbohydrate metabolism; galactose metabolism. Functionally, catalyzes the transfer of the gamma-phosphate of ATP to D-galactose to form alpha-D-galactose-1-phosphate (Gal-1-P). This Bacillus subtilis (strain 168) protein is Galactokinase.